The sequence spans 144 residues: Large ribosomal subunit protein uL16 (144 aa).

It belongs to the universal ribosomal protein uL16 family. As to quaternary structure, part of the 50S ribosomal subunit.

In terms of biological role, binds 23S rRNA and is also seen to make contacts with the A and possibly P site tRNAs. In Halothermothrix orenii (strain H 168 / OCM 544 / DSM 9562), this protein is Large ribosomal subunit protein uL16.